Consider the following 652-residue polypeptide: Serine/threonine-protein kinase ssp1 (652 aa).

Y58 carries the phosphotyrosine modification. The residue at position 59 (S59) is a Phosphoserine. Y63 is modified (phosphotyrosine). One can recognise a Protein kinase domain in the interval 135–409; the sequence is YEIIKELGRG…LVEVKLHPWT (275 aa). ATP is bound by residues 141-149 and K164; that span reads LGRGMHGKV. D267 acts as the Proton acceptor in catalysis. 2 disordered regions span residues 467–491 and 506–529; these read DSSSSVPSDSSICRPESSGNSSIGL and NESQKDRERKQVHPVEMGRNSSEK. Positions 508-518 are enriched in basic and acidic residues; it reads SQKDRERKQVH.

The protein belongs to the protein kinase superfamily. Ser/Thr protein kinase family.

The protein localises to the cytoplasm. It carries out the reaction L-seryl-[protein] + ATP = O-phospho-L-seryl-[protein] + ADP + H(+). It catalyses the reaction L-threonyl-[protein] + ATP = O-phospho-L-threonyl-[protein] + ADP + H(+). Functionally, involved in actin localization and thus in polarized cell growth. The polypeptide is Serine/threonine-protein kinase ssp1 (ssp1) (Schizosaccharomyces pombe (strain 972 / ATCC 24843) (Fission yeast)).